Consider the following 248-residue polypeptide: Putative transposase YncI (248 aa).

It belongs to the transposase 11 family.

In Escherichia coli (strain K12), this protein is Putative transposase YncI (yncI).